The sequence spans 245 residues: Alanyl-tRNA editing protein AlaX-M (245 aa).

Zn(2+) contacts are provided by H107, H111, C210, and H214.

The protein belongs to the class-II aminoacyl-tRNA synthetase family. Editing domain AlaX-M subfamily. Requires Zn(2+) as cofactor.

The protein resides in the cytoplasm. Its function is as follows. Functions in trans to edit the amino acid moiety from mischarged charged tRNA(Ala). The polypeptide is Alanyl-tRNA editing protein AlaX-M (alaXM) (Methanosarcina acetivorans (strain ATCC 35395 / DSM 2834 / JCM 12185 / C2A)).